Consider the following 240-residue polypeptide: DNA repair protein RecO (240 aa).

It belongs to the RecO family.

Functionally, involved in DNA repair and RecF pathway recombination. The protein is DNA repair protein RecO of Actinobacillus pleuropneumoniae serotype 3 (strain JL03).